The primary structure comprises 442 residues: Proline--tRNA ligase (442 aa).

The protein belongs to the class-II aminoacyl-tRNA synthetase family. ProS type 2 subfamily. In terms of assembly, homodimer.

It localises to the cytoplasm. It catalyses the reaction tRNA(Pro) + L-proline + ATP = L-prolyl-tRNA(Pro) + AMP + diphosphate. Functionally, catalyzes the attachment of proline to tRNA(Pro) in a two-step reaction: proline is first activated by ATP to form Pro-AMP and then transferred to the acceptor end of tRNA(Pro). This is Proline--tRNA ligase from Sinorhizobium medicae (strain WSM419) (Ensifer medicae).